The following is a 429-amino-acid chain: Cyclin-B2-3 (429 aa).

Residues 86–101 (ADHKPHIRDEETKKPD) show a composition bias toward basic and acidic residues. The disordered stretch occupies residues 86 to 109 (ADHKPHIRDEETKKPDSVSSEEPE).

It belongs to the cyclin family. Cyclin AB subfamily.

This chain is Cyclin-B2-3 (CYCB2-3), found in Arabidopsis thaliana (Mouse-ear cress).